We begin with the raw amino-acid sequence, 362 residues long: Dihydroorotate dehydrogenase (quinone) (362 aa).

Residues 62–66 (AGYDK) and Thr-86 each bind FMN. Position 66 (Lys-66) interacts with substrate. 111 to 115 (NRLGF) is a substrate binding site. FMN is bound by residues Asn-139 and Asn-170. Asn-170 contributes to the substrate binding site. Ser-173 (nucleophile) is an active-site residue. Asn-175 serves as a coordination point for substrate. Residues Lys-215 and Ser-243 each coordinate FMN. Position 244–245 (244–245 (NT)) interacts with substrate. FMN-binding positions include Gly-266, Gly-295, and 316 to 317 (YS).

Belongs to the dihydroorotate dehydrogenase family. Type 2 subfamily. In terms of assembly, monomer. FMN serves as cofactor.

It is found in the cell membrane. The enzyme catalyses (S)-dihydroorotate + a quinone = orotate + a quinol. The protein operates within pyrimidine metabolism; UMP biosynthesis via de novo pathway; orotate from (S)-dihydroorotate (quinone route): step 1/1. In terms of biological role, catalyzes the conversion of dihydroorotate to orotate with quinone as electron acceptor. The sequence is that of Dihydroorotate dehydrogenase (quinone) from Rhizobium leguminosarum bv. trifolii (strain WSM2304).